Here is a 1325-residue protein sequence, read N- to C-terminus: Lysine-specific demethylase 3A (1325 aa).

Disordered stretches follow at residues 249–284, 300–333, and 372–399; these read SKRI…QGHV, PANK…RRSV, and QNGK…TGLK. Over residues 274-283 the composition is skewed to polar residues; the sequence is SPEVSQSQGH. Residues 378–390 are compositionally biased toward low complexity; it reads SLISSRSSSLSDS. The segment at 669-694 adopts a C6-type zinc-finger fold; sequence CDVCDTTIFNLRWVCSKCGFGVCVDC. Disordered regions lie at residues 772-791 and 798-819; these read TLKE…SLQQ and PQLP…TASV. An LXXLL motif motif is present at residues 888 to 892; sequence LRNLL. A JmjC domain is found at 1062–1285; sequence MPSRFDDLMK…HCFWLTQEFR (224 aa). 3 residues coordinate Fe cation: His1124, Asp1126, and His1253.

The protein belongs to the JHDM2 histone demethylase family. Fe(2+) serves as cofactor.

The protein resides in the cytoplasm. It localises to the nucleus. It carries out the reaction N(6),N(6)-dimethyl-L-lysyl(9)-[histone H3] + 2 2-oxoglutarate + 2 O2 = L-lysyl(9)-[histone H3] + 2 formaldehyde + 2 succinate + 2 CO2. Histone demethylase that specifically demethylates 'Lys-9' of histone H3, thereby playing a central role in histone code. Preferentially demethylates mono- and dimethylated H3 'Lys-9' residue, with a preference for dimethylated residue, while it has weak or no activity on trimethylated H3 'Lys-9'. Demethylation of Lys residue generates formaldehyde and succinate. The chain is Lysine-specific demethylase 3A (KDM3A) from Gallus gallus (Chicken).